The following is a 401-amino-acid chain: L-rhamnonate dehydratase (401 aa).

Positions 29 and 55 each coordinate substrate. Mg(2+)-binding residues include aspartate 222, glutamate 248, and glutamate 276. The Proton acceptor role is filled by histidine 325. Residue glutamate 345 participates in substrate binding.

Belongs to the mandelate racemase/muconate lactonizing enzyme family. RhamD subfamily. In terms of assembly, homooctamer; tetramer of dimers. Mg(2+) is required as a cofactor.

The enzyme catalyses L-rhamnonate = 2-dehydro-3-deoxy-L-rhamnonate + H2O. In terms of biological role, catalyzes the dehydration of L-rhamnonate to 2-keto-3-deoxy-L-rhamnonate (KDR). The protein is L-rhamnonate dehydratase of Salmonella schwarzengrund (strain CVM19633).